The chain runs to 575 residues: Pre-hexon-linking protein IIIa (575 aa).

The peripentonal hexon-tethering domain stretch occupies residues Met-1 to Asn-95. Residues Ala-129–Gly-243 are binding to hexon-linking protein. At Ser-497 the chain carries Phosphoserine; by host. The propeptide occupies Gly-515–Tyr-575. The tract at residues Pro-525–Gly-549 is disordered.

It belongs to the adenoviridae hexon-linking protein IIIa family. In terms of assembly, interacts with hexon proteins; this interaction tethers the peripentonal hexons to hexons situated in the facet. Interacts with the penton protein (via N-terminus). Interacts with packaging protein 3; this interaction is required to promote correct genome packaging. Cleaved near the C-terminus by the viral protease during virion maturation to form the mature protein.

The protein resides in the virion. It is found in the host nucleus. In terms of biological role, structural component of the virion that acts as a cement protein on the capsid exterior which mediates the interactions between the hexons, including the peripentonal hexons, and reaches all the way to the penton vertices. Two hexon linking proteins IIIa, one from each facet, stabilize the unique edge interface between a pair of facets. As the virus enters the host cell, hexon linking proteins IIIa are shed concomitant with virion acidification in the endosome. During virus assembly, seems to play a role in the serotype specificity of the packaging of viral DNA via its interaction with packaging protein 3. This chain is Pre-hexon-linking protein IIIa, found in Galliformes (FAdV-1).